The following is a 214-amino-acid chain: Adenylate kinase (214 aa).

Residue 10–15 (GAGKGT) participates in ATP binding. The tract at residues 30–59 (STGDMFRAAIKAGTELGKQAKALMDEGKLV) is NMP. AMP contacts are provided by residues threonine 31, arginine 36, 57–59 (KLV), 85–88 (GFPR), and glutamine 92. The segment at 122-159 (GRRVHQTSGRSYHIVYNPPKVEGKDDVTGEDLIIRADD) is LID. Residues arginine 123 and 132-133 (SY) each bind ATP. AMP-binding residues include arginine 156 and arginine 167. Residue glutamine 200 participates in ATP binding.

Belongs to the adenylate kinase family. Monomer.

Its subcellular location is the cytoplasm. It catalyses the reaction AMP + ATP = 2 ADP. The protein operates within purine metabolism; AMP biosynthesis via salvage pathway; AMP from ADP: step 1/1. Functionally, catalyzes the reversible transfer of the terminal phosphate group between ATP and AMP. Plays an important role in cellular energy homeostasis and in adenine nucleotide metabolism. The protein is Adenylate kinase of Haemophilus influenzae (strain PittEE).